The chain runs to 311 residues: Acetyl-coenzyme A carboxylase carboxyl transferase subunit alpha (311 aa).

Residues 32-289 form the CoA carboxyltransferase C-terminal domain; that stretch reads ELNLLEERLR…KSVLEQKLAQ (258 aa).

It belongs to the AccA family. Acetyl-CoA carboxylase is a heterohexamer composed of biotin carboxyl carrier protein (AccB), biotin carboxylase (AccC) and two subunits each of ACCase subunit alpha (AccA) and ACCase subunit beta (AccD).

Its subcellular location is the cytoplasm. The enzyme catalyses N(6)-carboxybiotinyl-L-lysyl-[protein] + acetyl-CoA = N(6)-biotinyl-L-lysyl-[protein] + malonyl-CoA. The protein operates within lipid metabolism; malonyl-CoA biosynthesis; malonyl-CoA from acetyl-CoA: step 1/1. In terms of biological role, component of the acetyl coenzyme A carboxylase (ACC) complex. First, biotin carboxylase catalyzes the carboxylation of biotin on its carrier protein (BCCP) and then the CO(2) group is transferred by the carboxyltransferase to acetyl-CoA to form malonyl-CoA. The sequence is that of Acetyl-coenzyme A carboxylase carboxyl transferase subunit alpha from Exiguobacterium sibiricum (strain DSM 17290 / CCUG 55495 / CIP 109462 / JCM 13490 / 255-15).